The sequence spans 165 residues: Probable deoxyuridine 5'-triphosphate nucleotidohydrolase (165 aa).

Residues 39–49 are compositionally biased toward basic and acidic residues; it reads GRIDTDGKTIG. The tract at residues 39 to 64 is disordered; sequence GRIDTDGKTIGDRSPVTPTADEDSTD.

This sequence belongs to the dCTP deaminase family. Archaeal dUTPase subfamily.

It catalyses the reaction dUTP + H2O = dUMP + diphosphate + H(+). It participates in pyrimidine metabolism; dUMP biosynthesis; dUMP from dCTP (dUTP route): step 2/2. Functionally, this enzyme is involved in nucleotide metabolism: it produces dUMP, the immediate precursor of thymidine nucleotides and it decreases the intracellular concentration of dUTP so that uracil cannot be incorporated into DNA. In Halobacterium salinarum (strain ATCC 29341 / DSM 671 / R1), this protein is Probable deoxyuridine 5'-triphosphate nucleotidohydrolase.